Reading from the N-terminus, the 180-residue chain is uncharacterized protein (180 aa).

The next 6 helical transmembrane spans lie at 4–24 (KSNI…LSLF), 25–45 (IKNF…WLFI), 57–77 (NLLA…GIIY), 81–101 (FLDI…GILF), 124–144 (FLTL…LLIL), and 156–176 (IIRT…FYTF).

The protein localises to the cell membrane. This is an uncharacterized protein from Methanocaldococcus jannaschii (strain ATCC 43067 / DSM 2661 / JAL-1 / JCM 10045 / NBRC 100440) (Methanococcus jannaschii).